We begin with the raw amino-acid sequence, 481 residues long: Vanillin dehydrogenase (481 aa).

Residue 228-233 (GSTHVG) coordinates NAD(+). Catalysis depends on residues glutamate 250 and cysteine 284.

This sequence belongs to the aldehyde dehydrogenase family.

The enzyme catalyses vanillin + NAD(+) + H2O = vanillate + NADH + 2 H(+). Functionally, catalyzes the NAD-dependent oxidation of vanillin to vanillic acid. The chain is Vanillin dehydrogenase (vdh) from Pseudomonas sp. (strain HR199 / DSM 7063).